A 442-amino-acid polypeptide reads, in one-letter code: Pyruvate dehydrogenase complex protein X component, mitochondrial (442 aa).

A mitochondrion-targeting transit peptide spans 1-35 (MASLAAACRVSARLAARKLQHDAAVRGFRSSAAAL). In terms of domain architecture, Lipoyl-binding spans 37–113 (AQNFMMPALS…QVGTRIAVVA (77 aa)). The residue at position 78 (K78) is an N6-lipoyllysine. Residues 119 to 169 (ITKLEIPPDEGPQQLKAAAPAPAPTPAPAPASPQPQFAAPTPSPPKASTKV) are disordered. The span at 139–151 (APAPTPAPAPASP) shows a compositional bias: pro residues. Positions 152–169 (QPQFAAPTPSPPKASTKV) are enriched in low complexity. One can recognise a Peripheral subunit-binding (PSBD) domain in the interval 175-215 (PLLPSVHQLIKENGLDESAVSNITPTGPGGRILKGDVLAYL). Positions 244-269 (AKPVEPEKPQEEKASAPAPAPRAPEP) are disordered. Positions 245-257 (KPVEPEKPQEEKA) are enriched in basic and acidic residues. Residues 317–336 (PLPTNYQPTADELFDQVLGL) form an interaction to the E2 core region.

This sequence belongs to the 2-oxoacid dehydrogenase family. In terms of assembly, eukaryotic pyruvate dehydrogenase (PDH) complexes are organized as a core consisting of the oligomeric dihydrolipoamide acetyl-transferase (E2), around which are arranged multiple copies of pyruvate dehydrogenase (E1), dihydrolipoamide dehydrogenase (E3) and protein X (E3BP) bound by non-covalent bonds. The Chaetomium thermophilum PDH complex contains 60 E2 units, 12 E3BP units, about 20 E1 units, and 12 or more E3 units. The units are organized in 1 E2 60-mer, 4 E3BP trimers, about 20 E1 tetramers, and a maximum of 12 E3 dimers. The E3BP trimers are bound inside the icosahedral core with tetrahedral symmetry.

It is found in the mitochondrion. The 10-megadalton pyruvate dehydrogenase complex contains multiple copies of three enzymatic components: pyruvate dehydrogenase (E1), dihydrolipoamide acetyltransferase (E2) and lipoamide dehydrogenase (E3) and catalyzes the overall oxidative decarboxylation of pyruvate to form acetyl-CoA and CO(2). E3BP is responsible for tethering E3 in proximity to the core, forming the entire metabolon, and the number of E3s is limited by the number of E3BPs. Within the complex, pyruvate and thiamine pyrophosphate (TPP or vitamin B1) are bound by pyruvate dehydrogenase E1 subunits alpha and beta and pyruvate is decarboxylated leading to the 2-carbon hydrohyethyl bound to TPP. The E2 component contains covalently-bound lipoyl cofactors and transfers the hydroxyethyl group from TPP to an oxidized form of covalently bound lipoamide, and the resulting acetyl group is then transferred to free coenzyme A to form acetyl-CoA and reduced dihydrolipoamide-E2. Finally, the flavoprotein dihydrolipoamide dehydrogenase (E3) re-oxidizes the lipoyl group of dihydrolipoamide-E2 to form lipoamide-E2 and NADH. A fourth subunit, E3BP, is responsible for tethering E3 in proximity to the core, forming the entire metabolon. This chain is Pyruvate dehydrogenase complex protein X component, mitochondrial, found in Chaetomium thermophilum (strain DSM 1495 / CBS 144.50 / IMI 039719) (Thermochaetoides thermophila).